Reading from the N-terminus, the 466-residue chain is Soluble pyridine nucleotide transhydrogenase (466 aa).

36 to 45 (ERYQNVGGGC) serves as a coordination point for FAD.

It belongs to the class-I pyridine nucleotide-disulfide oxidoreductase family. It depends on FAD as a cofactor.

It is found in the cytoplasm. It carries out the reaction NAD(+) + NADPH = NADH + NADP(+). In terms of biological role, conversion of NADPH, generated by peripheral catabolic pathways, to NADH, which can enter the respiratory chain for energy generation. In Shigella boydii serotype 18 (strain CDC 3083-94 / BS512), this protein is Soluble pyridine nucleotide transhydrogenase.